Reading from the N-terminus, the 524-residue chain is Germ cell-less protein-like 1 (524 aa).

The disordered stretch occupies residues 1-37; it reads MGALSSRVLRPAGRTEQPEPTPGAGGAARRSDAGEDA. A Nuclear localization signal motif is present at residues 47–53; the sequence is GRKRKRS. The segment at 63 to 83 is disordered; sequence DSETDDDEDEGDEQQRLLNTP. Residue serine 64 is modified to Phosphoserine. Acidic residues predominate over residues 65-74; sequence ETDDDEDEGD. At threonine 66 the chain carries Phosphothreonine. The Nuclear localization signal signature appears at 83-89; the sequence is PRRKKLK. Residues 106–176 form the BTB domain; it reads SDIKICALGE…LYRDDVLIKP (71 aa).

In terms of assembly, interacts with TMPO-Beta, TSG101 and TFDP2. Interacts with EMD. As to expression, ubiquitously expressed at low levels throughout development and in adult tissues.

It is found in the nucleus matrix. In terms of biological role, possible function in spermatogenesis. Enhances the degradation of MDM2 and increases the amount of p53 probably by modulating the nucleocytoplasmic transport. The chain is Germ cell-less protein-like 1 (Gmcl1) from Mus musculus (Mouse).